The sequence spans 272 residues: NAD kinase (272 aa).

Catalysis depends on aspartate 62, which acts as the Proton acceptor. Residues aspartate 62 to glycine 63, arginine 67, asparagine 129 to glutamate 130, arginine 140, lysine 157, aspartate 159, isoleucine 167, serine 170 to serine 175, alanine 194, and glutamine 229 contribute to the NAD(+) site.

Belongs to the NAD kinase family. A divalent metal cation is required as a cofactor.

The protein localises to the cytoplasm. It carries out the reaction NAD(+) + ATP = ADP + NADP(+) + H(+). Functionally, involved in the regulation of the intracellular balance of NAD and NADP, and is a key enzyme in the biosynthesis of NADP. Catalyzes specifically the phosphorylation on 2'-hydroxyl of the adenosine moiety of NAD to yield NADP. This Thermoplasma acidophilum (strain ATCC 25905 / DSM 1728 / JCM 9062 / NBRC 15155 / AMRC-C165) protein is NAD kinase.